We begin with the raw amino-acid sequence, 148 residues long: uncharacterized protein (148 aa).

2 helical membrane-spanning segments follow: residues 16–36 (IVGAVIFSMSIIVILYISIIL) and 41–61 (LSFSIILAVDILIIALFAYIF).

To M.jannaschii MJ0696.

It is found in the cell membrane. This is an uncharacterized protein from Methanocaldococcus jannaschii (strain ATCC 43067 / DSM 2661 / JAL-1 / JCM 10045 / NBRC 100440) (Methanococcus jannaschii).